The primary structure comprises 461 residues: D-phenylhydantoinase (461 aa).

A divalent metal cation-binding residues include histidine 59, histidine 61, and lysine 151. At lysine 151 the chain carries N6-carboxylysine. Substrate is bound at residue tyrosine 156. Residues histidine 182 and histidine 239 each coordinate a divalent metal cation. Serine 286 provides a ligand contact to substrate. Residue aspartate 313 coordinates a divalent metal cation. Residue asparagine 335 coordinates substrate.

Belongs to the metallo-dependent hydrolases superfamily. Hydantoinase/dihydropyrimidinase family. As to quaternary structure, homotetramer. Requires Zn(2+) as cofactor. The cofactor is Ni(2+). Co(2+) serves as cofactor. It depends on Mn(2+) as a cofactor. Carboxylation allows a single lysine to coordinate two divalent metal cations.

It carries out the reaction D-5-phenylhydantoin + H2O = N-carbamoyl-D-phenylglycine + H(+). Its function is as follows. Catalyzes the stereospecific hydrolysis of the cyclic amide bond of D-hydantoin derivatives with an aromatic side chains at the 5'-position. Has no activity on dihydropyrimidines. The physiological function is unknown. In Escherichia coli (strain K12), this protein is D-phenylhydantoinase (hyuA).